The sequence spans 307 residues: tRNA pseudouridine synthase B (307 aa).

Residue Asp38 is the Nucleophile of the active site.

This sequence belongs to the pseudouridine synthase TruB family. Type 1 subfamily.

It catalyses the reaction uridine(55) in tRNA = pseudouridine(55) in tRNA. Its function is as follows. Responsible for synthesis of pseudouridine from uracil-55 in the psi GC loop of transfer RNAs. In Bacillus cereus (strain ZK / E33L), this protein is tRNA pseudouridine synthase B.